The sequence spans 700 residues: Pentatricopeptide repeat-containing protein 1, mitochondrial (700 aa).

The disordered stretch occupies residues 49–93 (SSSQLPLGQERQENTGSLGSDPSHSNSTATQEEDEEEEESFGTLS). Residues 62–78 (NTGSLGSDPSHSNSTAT) are compositionally biased toward polar residues. Residues 79 to 88 (QEEDEEEEES) show a composition bias toward acidic residues. PPR repeat units lie at residues 135–171 (TPYW…RLQP), 172–206 (MESN…DLEP), 207–245 (SDAT…NFEL), 246–280 (NLKT…GHVV), 281–317 (TEET…GLQP), and 318–354 (SRDS…ATVL). The tract at residues 393–414 (SQALGPPEPPEARVPGKAQPEV) is disordered. PPR repeat units lie at residues 519–553 (DLTF…GLVP), 554–585 (NLQT…QVTP), and 586–620 (NTHI…RVPV). The interval 672-700 (HPWQKFRTKPQGDQDTGKEADDGCALGGR) is disordered. Basic and acidic residues predominate over residues 681–692 (PQGDQDTGKEAD).

This sequence belongs to the PTCD1 family. In terms of assembly, associates with mitochondrial leucine tRNAs. Interacts with ELAC2. In terms of tissue distribution, abundant in testes, skeletal muscle and heart.

The protein resides in the mitochondrion. It is found in the mitochondrion matrix. Functionally, mitochondrial protein implicated in negative regulation of leucine tRNA levels, as well as negative regulation of mitochondria-encoded proteins and COX activity. Also affects the 3'-processing of mitochondrial tRNAs. This is Pentatricopeptide repeat-containing protein 1, mitochondrial (PTCD1) from Homo sapiens (Human).